Reading from the N-terminus, the 268-residue chain is Large ribosomal subunit protein uL3 (268 aa).

Glutamine 156 carries the N5-methylglutamine modification. Positions 242–259 are enriched in low complexity; that stretch reads VENEAAPADADNAAPEAA. Positions 242 to 268 are disordered; it reads VENEAAPADADNAAPEAAADGEEGTQA.

The protein belongs to the universal ribosomal protein uL3 family. As to quaternary structure, part of the 50S ribosomal subunit. Forms a cluster with proteins L14 and L19. Post-translationally, methylated by PrmB.

Its function is as follows. One of the primary rRNA binding proteins, it binds directly near the 3'-end of the 23S rRNA, where it nucleates assembly of the 50S subunit. The polypeptide is Large ribosomal subunit protein uL3 (Maricaulis maris (strain MCS10) (Caulobacter maris)).